The primary structure comprises 466 residues: 3-isopropylmalate dehydratase large subunit (466 aa).

[4Fe-4S] cluster contacts are provided by Cys-347, Cys-407, and Cys-410.

The protein belongs to the aconitase/IPM isomerase family. LeuC type 1 subfamily. In terms of assembly, heterodimer of LeuC and LeuD. [4Fe-4S] cluster serves as cofactor.

It catalyses the reaction (2R,3S)-3-isopropylmalate = (2S)-2-isopropylmalate. The protein operates within amino-acid biosynthesis; L-leucine biosynthesis; L-leucine from 3-methyl-2-oxobutanoate: step 2/4. Catalyzes the isomerization between 2-isopropylmalate and 3-isopropylmalate, via the formation of 2-isopropylmaleate. This Solibacter usitatus (strain Ellin6076) protein is 3-isopropylmalate dehydratase large subunit.